A 711-amino-acid polypeptide reads, in one-letter code: Methionine--tRNA ligase (711 aa).

The 'HIGH' region signature appears at 15–25 (PYTNGPIHIGH). Zn(2+)-binding residues include C147, C150, C160, and C163. Residues 336–340 (KLSTS) carry the 'KMSKS' region motif. T339 is a binding site for ATP. In terms of domain architecture, tRNA-binding spans 610–711 (DFAKMDIRIG…ADAPNGATVN (102 aa)).

This sequence belongs to the class-I aminoacyl-tRNA synthetase family. MetG type 1 subfamily. As to quaternary structure, homodimer. Zn(2+) serves as cofactor.

It localises to the cytoplasm. It carries out the reaction tRNA(Met) + L-methionine + ATP = L-methionyl-tRNA(Met) + AMP + diphosphate. In terms of biological role, is required not only for elongation of protein synthesis but also for the initiation of all mRNA translation through initiator tRNA(fMet) aminoacylation. This Flavobacterium johnsoniae (strain ATCC 17061 / DSM 2064 / JCM 8514 / BCRC 14874 / CCUG 350202 / NBRC 14942 / NCIMB 11054 / UW101) (Cytophaga johnsonae) protein is Methionine--tRNA ligase.